The chain runs to 332 residues: Geranylgeranyl pyrophosphate synthase dpasD (332 aa).

Isopentenyl diphosphate-binding residues include K55, R58, and H87. Residues D94 and D98 each contribute to the Mg(2+) site. Dimethylallyl diphosphate is bound at residue R103. R104 is a binding site for isopentenyl diphosphate. The dimethylallyl diphosphate site is built by K181, T182, and Q215. D218 provides a ligand contact to Mg(2+). Residues N222, K232, and K242 each coordinate dimethylallyl diphosphate.

The protein belongs to the FPP/GGPP synthase family. Requires Mg(2+) as cofactor.

It carries out the reaction isopentenyl diphosphate + dimethylallyl diphosphate = (2E)-geranyl diphosphate + diphosphate. It catalyses the reaction isopentenyl diphosphate + (2E)-geranyl diphosphate = (2E,6E)-farnesyl diphosphate + diphosphate. The enzyme catalyses isopentenyl diphosphate + (2E,6E)-farnesyl diphosphate = (2E,6E,10E)-geranylgeranyl diphosphate + diphosphate. It functions in the pathway secondary metabolite biosynthesis; terpenoid biosynthesis. Functionally, geranylgeranyl pyrophosphate synthase; part of the gene cluster that mediates the biosynthesis of the diterpenoid pyrones subglutinols A and B. The first step of the pathway is the synthesis of the alpha-pyrone moiety by the polyketide synthase dpasA via condensation of one acetyl-CoA starter unit with 3 malonyl-CoA units and 2 methylations. The alpha-pyrone is then combined with geranylgeranyl pyrophosphate (GGPP) formed by the GGPP synthase dpasD through the action of the prenyltransferase dpasC to yield a linear alpha-pyrone diterpenoid. Subsequent steps in the diterpenoid pyrone biosynthetic pathway involve the decalin core formation, which is initiated by the epoxidation of the C10-C11 olefin by the FAD-dependent oxidoreductase dpasE, and is followed by a cyclization cascade catalyzed by the terpene cyclase dpasB. The FAD-linked oxidoreductase dpasF is then involved in tetrahydrofuran (THF) ring formation at the C5 unit to complete the formation of subglutinols A and B. DpasF also possesses an additional catalytic ability of multi-step oxidations to generate a new DDP analog with an enone system at the C5 named FDDP A. This Apiospora sacchari (Arthrinium sacchari) protein is Geranylgeranyl pyrophosphate synthase dpasD.